We begin with the raw amino-acid sequence, 376 residues long: Queuine tRNA-ribosyltransferase (376 aa).

The Proton acceptor role is filled by D93. Residues 93 to 97, D147, Q190, and G217 each bind substrate; that span reads DSGGF. The interval 248-254 is RNA binding; that stretch reads GVGKPDD. D267 serves as the catalytic Nucleophile. 4 residues coordinate Zn(2+): C305, C307, C310, and H336.

It belongs to the queuine tRNA-ribosyltransferase family. Homodimer. Within each dimer, one monomer is responsible for RNA recognition and catalysis, while the other monomer binds to the replacement base PreQ1. It depends on Zn(2+) as a cofactor.

It catalyses the reaction 7-aminomethyl-7-carbaguanine + guanosine(34) in tRNA = 7-aminomethyl-7-carbaguanosine(34) in tRNA + guanine. It participates in tRNA modification; tRNA-queuosine biosynthesis. Catalyzes the base-exchange of a guanine (G) residue with the queuine precursor 7-aminomethyl-7-deazaguanine (PreQ1) at position 34 (anticodon wobble position) in tRNAs with GU(N) anticodons (tRNA-Asp, -Asn, -His and -Tyr). Catalysis occurs through a double-displacement mechanism. The nucleophile active site attacks the C1' of nucleotide 34 to detach the guanine base from the RNA, forming a covalent enzyme-RNA intermediate. The proton acceptor active site deprotonates the incoming PreQ1, allowing a nucleophilic attack on the C1' of the ribose to form the product. After dissociation, two additional enzymatic reactions on the tRNA convert PreQ1 to queuine (Q), resulting in the hypermodified nucleoside queuosine (7-(((4,5-cis-dihydroxy-2-cyclopenten-1-yl)amino)methyl)-7-deazaguanosine). In Ruegeria pomeroyi (strain ATCC 700808 / DSM 15171 / DSS-3) (Silicibacter pomeroyi), this protein is Queuine tRNA-ribosyltransferase.